The chain runs to 72 residues: Protein P13 (72 aa).

It is found in the virion membrane. In Pseudomonas phage phi6 (Bacteriophage phi-6), this protein is Protein P13 (P13).